Consider the following 246-residue polypeptide: Adenosylcobinamide-GDP ribazoletransferase (246 aa).

A run of 6 helical transmembrane segments spans residues 37–57 (FPAV…AGAL), 64–84 (ALAA…DGLA), 100–122 (LLAV…LQLL), 139–159 (ALVL…WWLM), 185–205 (LAAA…VLWW), and 223–243 (AGIE…GLWI).

The protein belongs to the CobS family. Requires Mg(2+) as cofactor.

It is found in the cell inner membrane. The enzyme catalyses alpha-ribazole + adenosylcob(III)inamide-GDP = adenosylcob(III)alamin + GMP + H(+). The catalysed reaction is alpha-ribazole 5'-phosphate + adenosylcob(III)inamide-GDP = adenosylcob(III)alamin 5'-phosphate + GMP + H(+). It participates in cofactor biosynthesis; adenosylcobalamin biosynthesis; adenosylcobalamin from cob(II)yrinate a,c-diamide: step 7/7. Joins adenosylcobinamide-GDP and alpha-ribazole to generate adenosylcobalamin (Ado-cobalamin). Also synthesizes adenosylcobalamin 5'-phosphate from adenosylcobinamide-GDP and alpha-ribazole 5'-phosphate. This chain is Adenosylcobinamide-GDP ribazoletransferase, found in Novosphingobium aromaticivorans (strain ATCC 700278 / DSM 12444 / CCUG 56034 / CIP 105152 / NBRC 16084 / F199).